The following is a 355-amino-acid chain: Holliday junction branch migration complex subunit RuvB (355 aa).

Positions 4–190 (TDKLAAERII…FGIVARLEFY (187 aa)) are large ATPase domain (RuvB-L). ATP contacts are provided by residues leucine 29, arginine 30, glycine 71, lysine 74, threonine 75, threonine 76, 137–139 (EDY), arginine 180, tyrosine 190, and arginine 227. Mg(2+) is bound at residue threonine 75. The interval 191–261 (NAEQLARIVT…VADAALKMLD (71 aa)) is small ATPAse domain (RuvB-S). Positions 264 to 355 (AVGFDLMDRK…LPGLWDSAAT (92 aa)) are head domain (RuvB-H). DNA-binding residues include arginine 300, arginine 319, and arginine 324.

The protein belongs to the RuvB family. In terms of assembly, homohexamer. Forms an RuvA(8)-RuvB(12)-Holliday junction (HJ) complex. HJ DNA is sandwiched between 2 RuvA tetramers; dsDNA enters through RuvA and exits via RuvB. An RuvB hexamer assembles on each DNA strand where it exits the tetramer. Each RuvB hexamer is contacted by two RuvA subunits (via domain III) on 2 adjacent RuvB subunits; this complex drives branch migration. In the full resolvosome a probable DNA-RuvA(4)-RuvB(12)-RuvC(2) complex forms which resolves the HJ.

The protein resides in the cytoplasm. The enzyme catalyses ATP + H2O = ADP + phosphate + H(+). In terms of biological role, the RuvA-RuvB-RuvC complex processes Holliday junction (HJ) DNA during genetic recombination and DNA repair, while the RuvA-RuvB complex plays an important role in the rescue of blocked DNA replication forks via replication fork reversal (RFR). RuvA specifically binds to HJ cruciform DNA, conferring on it an open structure. The RuvB hexamer acts as an ATP-dependent pump, pulling dsDNA into and through the RuvAB complex. RuvB forms 2 homohexamers on either side of HJ DNA bound by 1 or 2 RuvA tetramers; 4 subunits per hexamer contact DNA at a time. Coordinated motions by a converter formed by DNA-disengaged RuvB subunits stimulates ATP hydrolysis and nucleotide exchange. Immobilization of the converter enables RuvB to convert the ATP-contained energy into a lever motion, pulling 2 nucleotides of DNA out of the RuvA tetramer per ATP hydrolyzed, thus driving DNA branch migration. The RuvB motors rotate together with the DNA substrate, which together with the progressing nucleotide cycle form the mechanistic basis for DNA recombination by continuous HJ branch migration. Branch migration allows RuvC to scan DNA until it finds its consensus sequence, where it cleaves and resolves cruciform DNA. The chain is Holliday junction branch migration complex subunit RuvB from Paraburkholderia xenovorans (strain LB400).